The chain runs to 93 residues: Small integral membrane protein 36 (93 aa).

A helical transmembrane segment spans residues 14 to 34; that stretch reads LIILVASYVILLLVFLVSCVL. The disordered stretch occupies residues 70–93; that stretch reads SHWARGPSLHLKDPAPLGKKSTVV.

The protein resides in the membrane. The sequence is that of Small integral membrane protein 36 from Mus musculus (Mouse).